Here is a 275-residue protein sequence, read N- to C-terminus: Undecaprenyl-diphosphatase (275 aa).

Transmembrane regions (helical) follow at residues 1-21 (MDWV…FLPI), 42-62 (VKDA…LVYY), 80-100 (TLWT…LAFG), 107-127 (LFKP…MWLI), 147-167 (SLLI…SRSA), 184-204 (TKFS…LNLV), 214-234 (IGLL…YLAI), and 249-269 (FAVY…TGVM).

The protein belongs to the UppP family.

The protein resides in the cell membrane. The enzyme catalyses di-trans,octa-cis-undecaprenyl diphosphate + H2O = di-trans,octa-cis-undecaprenyl phosphate + phosphate + H(+). In terms of biological role, catalyzes the dephosphorylation of undecaprenyl diphosphate (UPP). Confers resistance to bacitracin. In Deinococcus deserti (strain DSM 17065 / CIP 109153 / LMG 22923 / VCD115), this protein is Undecaprenyl-diphosphatase.